A 181-amino-acid chain; its full sequence is ECF RNA polymerase sigma factor RpoE (181 aa).

The tract at residues 29–96 (LFQHFAPKVK…RRIDGLRKDR (68 aa)) is sigma-70 factor domain-2. The Interaction with polymerase core subunit RpoC signature appears at 53–56 (ECAQ). The interval 129–178 (AIARLPEAQRALIERAFFGDLTHRELAAETGLPLGTIKSRIRLALDRLRQ) is sigma-70 factor domain-4. The H-T-H motif DNA-binding region spans 151-170 (HRELAAETGLPLGTIKSRIR).

The protein belongs to the sigma-70 factor family. ECF subfamily. As to quaternary structure, interacts transiently with the RNA polymerase catalytic core formed by RpoA, RpoB, RpoC and RpoZ (2 alpha, 1 beta, 1 beta' and 1 omega subunit) to form the RNA polymerase holoenzyme that can initiate transcription. Forms a 1:1 complex (via sigma-70 factor domain 4) with anti-sigma factor ChrR; this inhibits the interaction of RpoE with the RNA polymerase catalytic core.

Functionally, sigma factors are initiation factors that promote the attachment of RNA polymerase to specific initiation sites and are then released. Extracytoplasmic function (ECF) sigma factors are held in an inactive form by a cognate anti-sigma factor until released. Sigma-E controls a transcriptional response to singlet oxygen, a by-product of photosynthesis; its continuous activity requires constant exposure to singlet oxygen. The regulon has about 180 genes that protect against or repair damage induced by singlet oxygen, including itself and rpoH2, a heat shock-responsive sigma factor. The sequence is that of ECF RNA polymerase sigma factor RpoE (rpoE) from Cereibacter sphaeroides (strain ATCC 17023 / DSM 158 / JCM 6121 / CCUG 31486 / LMG 2827 / NBRC 12203 / NCIMB 8253 / ATH 2.4.1.) (Rhodobacter sphaeroides).